An 87-amino-acid polypeptide reads, in one-letter code: Small ribosomal subunit protein bS20 (87 aa).

The disordered stretch occupies residues 1 to 22; sequence MANSAQARKRARQSVKQRAHNA. Positions 7–19 are enriched in basic residues; that stretch reads ARKRARQSVKQRA.

The protein belongs to the bacterial ribosomal protein bS20 family.

Binds directly to 16S ribosomal RNA. The protein is Small ribosomal subunit protein bS20 of Neisseria gonorrhoeae (strain ATCC 700825 / FA 1090).